Here is a 353-residue protein sequence, read N- to C-terminus: Photosystem II D2 protein (353 aa).

N-acetylthreonine is present on threonine 2. Threonine 2 is subject to Phosphothreonine. The helical transmembrane segment at 41-61 (TAYFALGGWFTGTTFVTSWYT) threads the bilayer. Residue histidine 118 participates in chlorophyll a binding. A helical membrane pass occupies residues 125 to 141 (GFMLRQFELARSVQLRP). Pheophytin a contacts are provided by glutamine 130 and asparagine 143. A helical membrane pass occupies residues 153-166 (VFVSVFLIYPLGQS). Histidine 198 contributes to the chlorophyll a binding site. A helical membrane pass occupies residues 208 to 228 (AALLCAIHGATVENTLFEDGD). Histidine 215 and phenylalanine 262 together coordinate a plastoquinone. Histidine 215 provides a ligand contact to Fe cation. Histidine 269 provides a ligand contact to Fe cation. A helical transmembrane segment spans residues 279-295 (GLWMSAIGVVGLALNLR).

This sequence belongs to the reaction center PufL/M/PsbA/D family. In terms of assembly, PSII is composed of 1 copy each of membrane proteins PsbA, PsbB, PsbC, PsbD, PsbE, PsbF, PsbH, PsbI, PsbJ, PsbK, PsbL, PsbM, PsbT, PsbX, PsbY, PsbZ, Psb30/Ycf12, at least 3 peripheral proteins of the oxygen-evolving complex and a large number of cofactors. It forms dimeric complexes. It depends on The D1/D2 heterodimer binds P680, chlorophylls that are the primary electron donor of PSII, and subsequent electron acceptors. It shares a non-heme iron and each subunit binds pheophytin, quinone, additional chlorophylls, carotenoids and lipids. There is also a Cl(-1) ion associated with D1 and D2, which is required for oxygen evolution. The PSII complex binds additional chlorophylls, carotenoids and specific lipids. as a cofactor.

The protein localises to the plastid. The protein resides in the chloroplast thylakoid membrane. It carries out the reaction 2 a plastoquinone + 4 hnu + 2 H2O = 2 a plastoquinol + O2. Photosystem II (PSII) is a light-driven water:plastoquinone oxidoreductase that uses light energy to abstract electrons from H(2)O, generating O(2) and a proton gradient subsequently used for ATP formation. It consists of a core antenna complex that captures photons, and an electron transfer chain that converts photonic excitation into a charge separation. The D1/D2 (PsbA/PsbD) reaction center heterodimer binds P680, the primary electron donor of PSII as well as several subsequent electron acceptors. D2 is needed for assembly of a stable PSII complex. The chain is Photosystem II D2 protein from Adiantum capillus-veneris (Maidenhair fern).